A 585-amino-acid polypeptide reads, in one-letter code: Glycerol-3-phosphate dehydrogenase (585 aa).

37–65 (DVVVIGGGVVGSGCALDAATRGLKVALVE) provides a ligand contact to FAD.

It belongs to the FAD-dependent glycerol-3-phosphate dehydrogenase family. FAD is required as a cofactor.

Its subcellular location is the cytoplasm. It carries out the reaction a quinone + sn-glycerol 3-phosphate = dihydroxyacetone phosphate + a quinol. The polypeptide is Glycerol-3-phosphate dehydrogenase (glpD) (Mycobacterium leprae (strain TN)).